The chain runs to 161 residues: Transcriptional repressor NrdR (161 aa).

The tract at residues 1 to 23 (MRCPFCGHPDTQVKDSRPAEDGN) is disordered. Residues 3–34 (CPFCGHPDTQVKDSRPAEDGNAIRRRRQCPSC) fold into a zinc finger. A compositionally biased stretch (basic and acidic residues) spans 11–23 (TQVKDSRPAEDGN). An ATP-cone domain is found at 49 to 139 (LTVMKKSGRR…VYKDFHKVED (91 aa)).

Belongs to the NrdR family. It depends on Zn(2+) as a cofactor.

Its function is as follows. Negatively regulates transcription of bacterial ribonucleotide reductase nrd genes and operons by binding to NrdR-boxes. The sequence is that of Transcriptional repressor NrdR from Maricaulis maris (strain MCS10) (Caulobacter maris).